Consider the following 230-residue polypeptide: Broad-specificity phosphatase YOR283W (230 aa).

The active-site Tele-phosphohistidine intermediate is the His24. Substrate contacts are provided by residues 36-37 (QG) and 102-105 (ERYM). Glu102 functions as the Proton donor/acceptor in the catalytic mechanism.

It belongs to the phosphoglycerate mutase family. BPG-dependent PGAM subfamily.

It localises to the cytoplasm. It is found in the nucleus. Metal-independent phosphatase active against a broad range of phosphorylated substrates including nucleoside tri- and diphosphates, phosphorylated organic acids, and amino acids. Shows no activity against phytic acid, phosphorylated carbohydrates, and nucleoside monophosphates. The chain is Broad-specificity phosphatase YOR283W from Saccharomyces cerevisiae (strain ATCC 204508 / S288c) (Baker's yeast).